The following is a 442-amino-acid chain: DMATS-type prenyltransferase mfmD (442 aa).

It belongs to the tryptophan dimethylallyltransferase family.

Its pathway is secondary metabolite biosynthesis; terpenoid biosynthesis. In terms of biological role, prenyltransferase; part of the gene cluster that mediates the biosynthesis of the phthalide-terpenoid hybrid 11'-O-desmethylfendlerol. Within the pathway, mfmD is responsible for farnesylation of the cyclopolic acid intermediate via an O-prenylation reaction. The biosynthesis of 11'-O-desmethylfendlerol begins with the NR-PKS mfmB that forms 3,5-dimethylorsellinic acid (DMOA), which is then transformed into the phthalide 5,7-dihydroxy-4-(hydroxymethyl)-6-methylphthalide by the cytochrome P450 monooxygenase mfmA and the hydrolase mfmC. Subsequently, the methyltransferase mfmE catalyzes 7-O-methylation to yield 5-hydroxy-4-(hydroxymethyl)-7-methoxy-6-methylphthalide, which undergoes C-3 hydroxylation by the cytochrome P450 monooxygenase mfmF. The resultant cyclopolic acid (2,5-dihydroxy-4-(hydroxymethyl)-7-methoxy-6-methylphthalide) is then farnesylated by the DMATS-type prenyltransferase mfmD to afford 5-O-farnesylcyclopolic acid. Finally, the Pyr4-family terpene cyclase mfmH cyclizes the farnesyl moiety of 5-O-farnesylcyclopolic acid into a drimane-like structure, thus completing the biosynthesis of 11'-O-desmethylfendlerol. The sequence is that of DMATS-type prenyltransferase mfmD from Annulohypoxylon moriforme (Filamentous fungus).